The sequence spans 427 residues: Serine--tRNA ligase (427 aa).

231–233 lines the L-serine pocket; that stretch reads TAE. Position 262–264 (262–264) interacts with ATP; sequence RSE. Residue glutamate 285 participates in L-serine binding. 349–352 is a binding site for ATP; the sequence is EISS. Residue serine 385 coordinates L-serine.

This sequence belongs to the class-II aminoacyl-tRNA synthetase family. Type-1 seryl-tRNA synthetase subfamily. Homodimer. The tRNA molecule binds across the dimer.

Its subcellular location is the cytoplasm. The enzyme catalyses tRNA(Ser) + L-serine + ATP = L-seryl-tRNA(Ser) + AMP + diphosphate + H(+). It catalyses the reaction tRNA(Sec) + L-serine + ATP = L-seryl-tRNA(Sec) + AMP + diphosphate + H(+). Its pathway is aminoacyl-tRNA biosynthesis; selenocysteinyl-tRNA(Sec) biosynthesis; L-seryl-tRNA(Sec) from L-serine and tRNA(Sec): step 1/1. Functionally, catalyzes the attachment of serine to tRNA(Ser). Is also able to aminoacylate tRNA(Sec) with serine, to form the misacylated tRNA L-seryl-tRNA(Sec), which will be further converted into selenocysteinyl-tRNA(Sec). The polypeptide is Serine--tRNA ligase (Listeria welshimeri serovar 6b (strain ATCC 35897 / DSM 20650 / CCUG 15529 / CIP 8149 / NCTC 11857 / SLCC 5334 / V8)).